The primary structure comprises 349 residues: tRNA uridine(34) hydroxylase (349 aa).

Residues 146–240 form the Rhodanese domain; it reads DDPDAVFIDM…YARKAREQGL (95 aa). The active-site Cysteine persulfide intermediate is cysteine 200. The segment covering 314–328 has biased composition (basic and acidic residues); sequence PEEEQRRRRAGRENG. The tract at residues 314-349 is disordered; the sequence is PEEEQRRRRAGRENGNKIFNKSRGRLNTTLGIPDPE.

Belongs to the TrhO family.

It carries out the reaction uridine(34) in tRNA + AH2 + O2 = 5-hydroxyuridine(34) in tRNA + A + H2O. Functionally, catalyzes oxygen-dependent 5-hydroxyuridine (ho5U) modification at position 34 in tRNAs. The chain is tRNA uridine(34) hydroxylase from Cronobacter sakazakii (strain ATCC BAA-894) (Enterobacter sakazakii).